Here is a 100-residue protein sequence, read N- to C-terminus: Nucleoid-associated protein Rcas_2292 (100 aa).

Belongs to the YbaB/EbfC family. Homodimer.

The protein localises to the cytoplasm. It is found in the nucleoid. In terms of biological role, binds to DNA and alters its conformation. May be involved in regulation of gene expression, nucleoid organization and DNA protection. This Roseiflexus castenholzii (strain DSM 13941 / HLO8) protein is Nucleoid-associated protein Rcas_2292.